Here is a 379-residue protein sequence, read N- to C-terminus: Succinate--CoA ligase [ADP-forming] subunit beta (379 aa).

In terms of domain architecture, ATP-grasp spans 9–235; the sequence is KEIAKNNGIP…GRELSEMEAI (227 aa). Residues lysine 45, glutamate 91, isoleucine 94, and glutamate 99 each coordinate ATP. Asparagine 191 and aspartate 205 together coordinate Mg(2+). Substrate is bound by residues asparagine 255 and 312–314; that span reads GIT.

It belongs to the succinate/malate CoA ligase beta subunit family. Heterotetramer of two alpha and two beta subunits. Mg(2+) is required as a cofactor.

It catalyses the reaction succinate + ATP + CoA = succinyl-CoA + ADP + phosphate. It carries out the reaction GTP + succinate + CoA = succinyl-CoA + GDP + phosphate. It functions in the pathway carbohydrate metabolism; tricarboxylic acid cycle; succinate from succinyl-CoA (ligase route): step 1/1. Functionally, succinyl-CoA synthetase functions in the citric acid cycle (TCA), coupling the hydrolysis of succinyl-CoA to the synthesis of either ATP or GTP and thus represents the only step of substrate-level phosphorylation in the TCA. The beta subunit provides nucleotide specificity of the enzyme and binds the substrate succinate, while the binding sites for coenzyme A and phosphate are found in the alpha subunit. This chain is Succinate--CoA ligase [ADP-forming] subunit beta, found in Staphylothermus marinus (strain ATCC 43588 / DSM 3639 / JCM 9404 / F1).